A 726-amino-acid polypeptide reads, in one-letter code: Kinesin-like protein KIN-10B (726 aa).

3 disordered regions span residues 1 to 20, 60 to 82, and 402 to 423; these read MEQQ…RVVA, AATA…QQQK, and KNAR…TANR. The region spanning 15-359 is the Kinesin motor domain; sequence GVRVVARICP…LALASRSSQV (345 aa). Residues 408–423 are compositionally biased toward polar residues; that stretch reads FNNSGVKGGQTPTANR.

It belongs to the TRAFAC class myosin-kinesin ATPase superfamily. Kinesin family. KIN-10 subfamily.

The polypeptide is Kinesin-like protein KIN-10B (Oryza sativa subsp. japonica (Rice)).